Reading from the N-terminus, the 215-residue chain is Redox-sensing transcriptional repressor Rex (215 aa).

Residues 18–57 (LYHRYLKYLDESGKERVSSAELSEAVKVDSATIRRDFSYF) constitute a DNA-binding region (H-T-H motif). 92–97 (GVGNLG) is an NAD(+) binding site.

This sequence belongs to the transcriptional regulatory Rex family. As to quaternary structure, homodimer.

It localises to the cytoplasm. Functionally, modulates transcription in response to changes in cellular NADH/NAD(+) redox state. The sequence is that of Redox-sensing transcriptional repressor Rex from Listeria innocua serovar 6a (strain ATCC BAA-680 / CLIP 11262).